The following is a 506-amino-acid chain: Adenylosuccinate synthetase (506 aa).

Residues 35-41 (GDEGKGK) and 63-65 (GHT) contribute to the GTP site. The Proton acceptor role is filled by Asp36. 2 residues coordinate Mg(2+): Asp36 and Gly63. Residues 36–39 (DEGK), 61–64 (NAGH), Thr212, Arg226, Asn304, Thr319, and Arg383 each bind IMP. Catalysis depends on His64, which acts as the Proton donor. Position 379–385 (379–385 (VTTKRKR)) interacts with substrate. GTP is bound by residues Arg385, 411–413 (KLD), and 494–496 (GVG).

This sequence belongs to the adenylosuccinate synthetase family. Homodimer. It depends on Mg(2+) as a cofactor.

It localises to the cytoplasm. It catalyses the reaction IMP + L-aspartate + GTP = N(6)-(1,2-dicarboxyethyl)-AMP + GDP + phosphate + 2 H(+). It functions in the pathway purine metabolism; AMP biosynthesis via de novo pathway; AMP from IMP: step 1/2. Functionally, plays an important role in the de novo pathway and in the salvage pathway of purine nucleotide biosynthesis. Catalyzes the first committed step in the biosynthesis of AMP from IMP. The polypeptide is Adenylosuccinate synthetase (Drosophila yakuba (Fruit fly)).